Consider the following 551-residue polypeptide: Urocanate hydratase (551 aa).

NAD(+)-binding positions include 48–49 (GG), Q126, 172–174 (GMG), E192, R197, 238–239 (NA), 259–263 (QTSAH), 269–270 (YI), and Y318. Residue C406 is part of the active site. G488 is an NAD(+) binding site.

The protein belongs to the urocanase family. Requires NAD(+) as cofactor.

It localises to the cytoplasm. It carries out the reaction 4-imidazolone-5-propanoate = trans-urocanate + H2O. The protein operates within amino-acid degradation; L-histidine degradation into L-glutamate; N-formimidoyl-L-glutamate from L-histidine: step 2/3. Functionally, catalyzes the conversion of urocanate to 4-imidazolone-5-propionate. In Geobacillus kaustophilus (strain HTA426), this protein is Urocanate hydratase.